Consider the following 954-residue polypeptide: Valine--tRNA ligase (954 aa).

Positions 48–58 match the 'HIGH' region motif; sequence PNVTGSLHMGH. The 'KMSKS' region motif lies at 560-564; it reads KMSKS. ATP is bound at residue K563. Positions 883-953 form a coiled coil; the sequence is AGFINKEAEL…LKQQYLAIEA (71 aa).

Belongs to the class-I aminoacyl-tRNA synthetase family. ValS type 1 subfamily. In terms of assembly, monomer.

The protein localises to the cytoplasm. The enzyme catalyses tRNA(Val) + L-valine + ATP = L-valyl-tRNA(Val) + AMP + diphosphate. Its function is as follows. Catalyzes the attachment of valine to tRNA(Val). As ValRS can inadvertently accommodate and process structurally similar amino acids such as threonine, to avoid such errors, it has a 'posttransfer' editing activity that hydrolyzes mischarged Thr-tRNA(Val) in a tRNA-dependent manner. The protein is Valine--tRNA ligase of Pasteurella multocida (strain Pm70).